The primary structure comprises 317 residues: Acetyl-coenzyme A carboxylase carboxyl transferase subunit alpha (317 aa).

A CoA carboxyltransferase C-terminal domain is found at 40–293 (LEKRSADALK…GDIIAASLRS (254 aa)).

This sequence belongs to the AccA family. In terms of assembly, acetyl-CoA carboxylase is a heterohexamer composed of biotin carboxyl carrier protein (AccB), biotin carboxylase (AccC) and two subunits each of ACCase subunit alpha (AccA) and ACCase subunit beta (AccD).

Its subcellular location is the cytoplasm. It catalyses the reaction N(6)-carboxybiotinyl-L-lysyl-[protein] + acetyl-CoA = N(6)-biotinyl-L-lysyl-[protein] + malonyl-CoA. It functions in the pathway lipid metabolism; malonyl-CoA biosynthesis; malonyl-CoA from acetyl-CoA: step 1/1. Functionally, component of the acetyl coenzyme A carboxylase (ACC) complex. First, biotin carboxylase catalyzes the carboxylation of biotin on its carrier protein (BCCP) and then the CO(2) group is transferred by the carboxyltransferase to acetyl-CoA to form malonyl-CoA. The chain is Acetyl-coenzyme A carboxylase carboxyl transferase subunit alpha from Brucella melitensis biotype 2 (strain ATCC 23457).